The primary structure comprises 191 residues: Fe/S biogenesis protein NfuA (191 aa).

[4Fe-4S] cluster contacts are provided by cysteine 149 and cysteine 152.

The protein belongs to the NfuA family. As to quaternary structure, homodimer. [4Fe-4S] cluster is required as a cofactor.

Its function is as follows. Involved in iron-sulfur cluster biogenesis. Binds a 4Fe-4S cluster, can transfer this cluster to apoproteins, and thereby intervenes in the maturation of Fe/S proteins. Could also act as a scaffold/chaperone for damaged Fe/S proteins. The protein is Fe/S biogenesis protein NfuA of Pectobacterium atrosepticum (strain SCRI 1043 / ATCC BAA-672) (Erwinia carotovora subsp. atroseptica).